Consider the following 394-residue polypeptide: Acetyl-CoA acetyltransferase (394 aa).

Cys-88 (acyl-thioester intermediate) is an active-site residue. Catalysis depends on proton acceptor residues His-349 and Cys-379.

This sequence belongs to the thiolase-like superfamily. Thiolase family.

The protein localises to the cytoplasm. The enzyme catalyses 2 acetyl-CoA = acetoacetyl-CoA + CoA. It participates in metabolic intermediate biosynthesis; (R)-mevalonate biosynthesis; (R)-mevalonate from acetyl-CoA: step 1/3. The protein is Acetyl-CoA acetyltransferase (atoB) of Escherichia coli (strain K12).